We begin with the raw amino-acid sequence, 339 residues long: Cathepsin B (339 aa).

Positions 1–17 are cleaved as a signal peptide; that stretch reads MWWSLIPLSCLLALTSA. Residues 18–79 constitute a propeptide, activation peptide; it reads HDKPSSHPLS…ERVGFSEDIN (62 aa). 6 disulfides stabilise this stretch: Cys-93–Cys-122, Cys-105–Cys-150, Cys-141–Cys-207, Cys-142–Cys-146, Cys-179–Cys-211, and Cys-187–Cys-198. The active site involves Cys-108. An N-linked (GlcNAc...) asparagine glycan is attached at Asn-192. Position 220 is an N6-acetyllysine (Lys-220). Residues His-278 and Asn-298 contribute to the active site. Positions 334–339 are excised as a propeptide; that stretch reads QYWGRF.

Belongs to the peptidase C1 family. Dimer of a heavy chain and a light chain cross-linked by a disulfide bond. Interacts with SRPX2. Directly interacts with SHKBP1. Expressed in the epithelial cells of the prostate and mammary gland.

It localises to the lysosome. It is found in the melanosome. The protein localises to the secreted. The protein resides in the extracellular space. Its subcellular location is the apical cell membrane. The catalysed reaction is Hydrolysis of proteins with broad specificity for peptide bonds. Preferentially cleaves -Arg-Arg-|-Xaa bonds in small molecule substrates (thus differing from cathepsin L). In addition to being an endopeptidase, shows peptidyl-dipeptidase activity, liberating C-terminal dipeptides.. Functionally, thiol protease which is believed to participate in intracellular degradation and turnover of proteins. Cleaves matrix extracellular phosphoglycoprotein MEPE. Involved in the solubilization of cross-linked TG/thyroglobulin in the thyroid follicle lumen. Has also been implicated in tumor invasion and metastasis. This is Cathepsin B (Ctsb) from Rattus norvegicus (Rat).